The sequence spans 305 residues: tRNA dimethylallyltransferase (305 aa).

8–15 contributes to the ATP binding site; sequence GPTAVGKT. Position 10 to 15 (10 to 15) interacts with substrate; sequence TAVGKT. Positions 33–36 are interaction with substrate tRNA; sequence DSRQ.

This sequence belongs to the IPP transferase family. Monomer. Requires Mg(2+) as cofactor.

The enzyme catalyses adenosine(37) in tRNA + dimethylallyl diphosphate = N(6)-dimethylallyladenosine(37) in tRNA + diphosphate. In terms of biological role, catalyzes the transfer of a dimethylallyl group onto the adenine at position 37 in tRNAs that read codons beginning with uridine, leading to the formation of N6-(dimethylallyl)adenosine (i(6)A). The sequence is that of tRNA dimethylallyltransferase from Thermotoga petrophila (strain ATCC BAA-488 / DSM 13995 / JCM 10881 / RKU-1).